Here is a 151-residue protein sequence, read N- to C-terminus: Large ribosomal subunit protein uL13 (151 aa).

The tract at residues 129 to 151 (SNHPHQAQKPETLTINTIPGGNN) is disordered.

It belongs to the universal ribosomal protein uL13 family. Part of the 50S ribosomal subunit.

In terms of biological role, this protein is one of the early assembly proteins of the 50S ribosomal subunit, although it is not seen to bind rRNA by itself. It is important during the early stages of 50S assembly. The sequence is that of Large ribosomal subunit protein uL13 from Gloeothece citriformis (strain PCC 7424) (Cyanothece sp. (strain PCC 7424)).